A 451-amino-acid polypeptide reads, in one-letter code: Gamma-aminobutyric acid receptor subunit alpha-2 (451 aa).

The signal sequence occupies residues 1-28 (MKTKLNSSNMQLLLFVFLAWDPARLVLA). Topologically, residues 29 to 249 (NIQEDEAKNN…MTAHFHLKRK (221 aa)) are extracellular. An N-linked (GlcNAc...) asparagine glycan is attached at asparagine 38. Arginine 94 is a 4-aminobutanoate binding site. N-linked (GlcNAc...) asparagine glycosylation occurs at asparagine 138. Position 157 (threonine 157) interacts with 4-aminobutanoate. Cysteine 166 and cysteine 180 are disulfide-bonded. Residue asparagine 201 is glycosylated (N-linked (GlcNAc...) asparagine). The helical transmembrane segment at 250-270 (IGYFVIQTYLPCIMTVILSQV) threads the bilayer. Residues 271–280 (SFWLNRESVP) lie on the Cytoplasmic side of the membrane. Residues 281-300 (ARTVFGVTTVLTMTTLSISA) form a helical membrane-spanning segment. Over 301–311 (RNSLPKVAYAT) the chain is Extracellular. Residues 312 to 332 (AMDWFIAVCYAFVFSALIEFA) traverse the membrane as a helical segment. Over 333 to 420 (TVNYFTKRGW…FNSVSKIDRM (88 aa)) the chain is Cytoplasmic. The helical transmembrane segment at 421–441 (SRIVFPVLFGTFNLVYWATYL) threads the bilayer. Over 442–451 (NREPVLGVSP) the chain is Extracellular.

Belongs to the ligand-gated ion channel (TC 1.A.9) family. Gamma-aminobutyric acid receptor (TC 1.A.9.5) subfamily. GABRA2 sub-subfamily. As to quaternary structure, heteropentamer, formed by a combination of alpha (GABRA1-6), beta (GABRB1-3), gamma (GABRG1-3), delta (GABRD), epsilon (GABRE), rho (GABRR1-3), pi (GABRP) and theta (GABRQ) subunits, each subunit exhibiting distinct physiological and pharmacological properties. Interacts with UBQLN1. Interacts with KIF21B. Interacts with LHFPL4. Interacts with SHISA7; interaction leads to the regulation of GABA(A) receptor trafficking, channel deactivation kinetics and pharmacology. Post-translationally, glycosylated.

It localises to the postsynaptic cell membrane. The protein resides in the cell membrane. The protein localises to the cytoplasmic vesicle membrane. Its subcellular location is the cell projection. It is found in the dendrite. It carries out the reaction chloride(in) = chloride(out). With respect to regulation, activated by pentobarbital. Inhibited by the antagonist bicuculline. Alpha subunit of the heteropentameric ligand-gated chloride channel gated by gamma-aminobutyric acid (GABA), a major inhibitory neurotransmitter in the brain. GABA-gated chloride channels, also named GABA(A) receptors (GABAAR), consist of five subunits arranged around a central pore and contain GABA active binding site(s) located at the alpha and beta subunit interface(s). When activated by GABA, GABAARs selectively allow the flow of chloride anions across the cell membrane down their electrochemical gradient. Chloride influx into the postsynaptic neuron following GABAAR opening decreases the neuron ability to generate a new action potential, thereby reducing nerve transmission. The alpha-2 subunit exhibits synaptogenic activity together with beta-2 and very little to no activity together with beta-3, the gamma-2 subunit being necessary but not sufficient to induce rapid synaptic contacts formation. The protein is Gamma-aminobutyric acid receptor subunit alpha-2 (GABRA2) of Bos taurus (Bovine).